The chain runs to 208 residues: Protein GrpE (208 aa).

Residues 1–25 (MVDNKDFNEELKENIQEELDNETKA) show a composition bias toward basic and acidic residues. The disordered stretch occupies residues 1–38 (MVDNKDFNEELKENIQEELDNETKAENPNIDEEVEEVS). Residues 29–38 (NIDEEVEEVS) show a composition bias toward acidic residues.

This sequence belongs to the GrpE family. Homodimer.

The protein localises to the cytoplasm. In terms of biological role, participates actively in the response to hyperosmotic and heat shock by preventing the aggregation of stress-denatured proteins, in association with DnaK and GrpE. It is the nucleotide exchange factor for DnaK and may function as a thermosensor. Unfolded proteins bind initially to DnaJ; upon interaction with the DnaJ-bound protein, DnaK hydrolyzes its bound ATP, resulting in the formation of a stable complex. GrpE releases ADP from DnaK; ATP binding to DnaK triggers the release of the substrate protein, thus completing the reaction cycle. Several rounds of ATP-dependent interactions between DnaJ, DnaK and GrpE are required for fully efficient folding. In Clostridium perfringens (strain 13 / Type A), this protein is Protein GrpE.